Here is a 469-residue protein sequence, read N- to C-terminus: 3-isopropylmalate dehydratase large subunit (469 aa).

3 residues coordinate [4Fe-4S] cluster: C350, C410, and C413.

This sequence belongs to the aconitase/IPM isomerase family. LeuC type 1 subfamily. In terms of assembly, heterodimer of LeuC and LeuD. The cofactor is [4Fe-4S] cluster.

The enzyme catalyses (2R,3S)-3-isopropylmalate = (2S)-2-isopropylmalate. The protein operates within amino-acid biosynthesis; L-leucine biosynthesis; L-leucine from 3-methyl-2-oxobutanoate: step 2/4. Functionally, catalyzes the isomerization between 2-isopropylmalate and 3-isopropylmalate, via the formation of 2-isopropylmaleate. In Rhizobium etli (strain CIAT 652), this protein is 3-isopropylmalate dehydratase large subunit.